We begin with the raw amino-acid sequence, 205 residues long: uncharacterized protein (205 aa).

Belongs to the flavoredoxin family. The cofactor is FMN.

This is an uncharacterized protein from Bacillus subtilis (strain 168).